A 316-amino-acid polypeptide reads, in one-letter code: Phosphatidylinositol mannoside acyltransferase (316 aa).

His-137 acts as the Proton acceptor in catalysis. The hexadecanoyl-CoA site is built by His-137 and Arg-175. Glu-211 is a catalytic residue. Hexadecanoyl-CoA is bound at residue Glu-240.

The protein belongs to the LpxL/LpxM/LpxP family.

The protein resides in the cell inner membrane. The enzyme catalyses a 2,6-O-bis(alpha-D-mannopyranosyl)-1-phosphatidyl-1D-myo-inositol + an acyl-CoA = a 2-O-(alpha-D-mannosyl)-6-O-(6-O-acyl-alpha-D-mannosyl)-1-phosphatidyl-1D-myo-inositol + CoA. It catalyses the reaction a 1,2-diacyl-sn-glycero-3-phospho-[alpha-D-mannopyranosyl-(1&lt;-&gt;6)-D-myo-inositol] + an acyl-CoA = a 1,2-diacyl-sn-glycero-3-phospho-[alpha-D-6-acyl-mannopyranosyl-(1&lt;-&gt;6)-D-myo-inositol] + CoA. It participates in phospholipid metabolism; phosphatidylinositol metabolism. Its function is as follows. Catalyzes the transfer of a palmitoyl moiety from palmitoyl-CoA to the 6-position of the mannose ring linked to the 2-position of myo-inositol in phosphatidyl-myo-inositol monomannoside (PIM1) or dimannoside (PIM2). Essential for growth and survival in axenic cultures and during macrophage infection and in a mouse model of infection. In Mycobacterium tuberculosis (strain ATCC 25618 / H37Rv), this protein is Phosphatidylinositol mannoside acyltransferase.